A 114-amino-acid polypeptide reads, in one-letter code: MTFKACIAIITALCAMQVICEDDEDYGDLGGCPFLVAENKTGYPTIVACKQDCNGTTETAPNGTRCFSIGDEGLRRMTANLPYDCPLGQCSNGDCIPKETYEVCYRRNWRDKKN.

The first 20 residues, 1–20, serve as a signal peptide directing secretion; that stretch reads MTFKACIAIITALCAMQVIC. Intrachain disulfides connect Cys-32–Cys-53, Cys-49–Cys-90, Cys-66–Cys-95, and Cys-85–Cys-104. N-linked (GlcNAc...) asparagine glycans are attached at residues Asn-39, Asn-54, and Asn-62.

Belongs to the evasin C8 family. Monomer.

It is found in the secreted. Salivary chemokine-binding protein which shows chemokine neutralizing activity and binds to host chemokines CCL3, CCL4 and CCL18. Binds to CCL3 with 1:1 stoichiometry. This Rhipicephalus sanguineus (Brown dog tick) protein is Evasin-1.